An 859-amino-acid chain; its full sequence is Leucine--tRNA ligase (859 aa).

The 'HIGH' region signature appears at Pro-42–His-52. Positions Lys-611–Ser-615 match the 'KMSKS' region motif. Lys-614 is a binding site for ATP.

It belongs to the class-I aminoacyl-tRNA synthetase family.

Its subcellular location is the cytoplasm. The enzyme catalyses tRNA(Leu) + L-leucine + ATP = L-leucyl-tRNA(Leu) + AMP + diphosphate. The protein is Leucine--tRNA ligase of Fusobacterium nucleatum subsp. nucleatum (strain ATCC 25586 / DSM 15643 / BCRC 10681 / CIP 101130 / JCM 8532 / KCTC 2640 / LMG 13131 / VPI 4355).